The following is a 27-amino-acid chain: Ranatuerin-2Cb (27 aa).

Cys-20 and Cys-25 are oxidised to a cystine.

Expressed by the skin glands.

The protein resides in the secreted. In terms of biological role, antibacterial activity against Gram-positive bacterium S.aureus (MIC=40 uM) and Gram-negative bacterium E.coli (MIC=2 uM). Has activity against C.albicans (MIC=46 uM). The polypeptide is Ranatuerin-2Cb (Lithobates clamitans (Green frog)).